The sequence spans 483 residues: 6-phosphogluconate dehydrogenase, decarboxylating (483 aa).

Residues 10–15 (GLAVMG) and 33–35 (NRT) contribute to the NADP(+) site. K38 is modified (N6-acetyllysine). A Phosphoserine modification is found at S57. NADP(+) contacts are provided by residues 75–77 (VKA) and N103. Residues N103, S129, and G131 each contribute to the substrate site. S129 bears the Phosphoserine mark. Residue K184 is the Proton acceptor of the active site. 187–188 (HN) provides a ligand contact to substrate. Residue E191 is the Proton donor of the active site. Y192, K261, R288, R447, and H453 together coordinate substrate. NADP(+) is bound at residue 478–481 (SSSY).

It belongs to the 6-phosphogluconate dehydrogenase family. As to quaternary structure, homodimer.

Its subcellular location is the cytoplasm. It carries out the reaction 6-phospho-D-gluconate + NADP(+) = D-ribulose 5-phosphate + CO2 + NADPH. Its pathway is carbohydrate degradation; pentose phosphate pathway; D-ribulose 5-phosphate from D-glucose 6-phosphate (oxidative stage): step 3/3. Catalyzes the oxidative decarboxylation of 6-phosphogluconate to ribulose 5-phosphate and CO(2), with concomitant reduction of NADP to NADPH. The protein is 6-phosphogluconate dehydrogenase, decarboxylating (PGD) of Ovis aries (Sheep).